We begin with the raw amino-acid sequence, 433 residues long: Glutamate-1-semialdehyde 2,1-aminomutase (433 aa).

K273 is subject to N6-(pyridoxal phosphate)lysine.

The protein belongs to the class-III pyridoxal-phosphate-dependent aminotransferase family. HemL subfamily. Homodimer. The cofactor is pyridoxal 5'-phosphate.

It is found in the cytoplasm. It carries out the reaction (S)-4-amino-5-oxopentanoate = 5-aminolevulinate. It participates in porphyrin-containing compound metabolism; protoporphyrin-IX biosynthesis; 5-aminolevulinate from L-glutamyl-tRNA(Glu): step 2/2. The chain is Glutamate-1-semialdehyde 2,1-aminomutase from Ralstonia pickettii (strain 12J).